The chain runs to 286 residues: Spermidine/putrescine transport system permease protein PotB homolog (286 aa).

Transmembrane regions (helical) follow at residues 10–30, 62–82, 94–114, 136–156, 193–213, and 248–268; these read AVPF…WIIV, LWTA…FCYF, FVIA…LIGL, FGSG…MFLP, TAIL…VAIA, and GAII…IFAP. One can recognise an ABC transmembrane type-1 domain in the interval 58–264; it reads FWTSLWTATV…LITFAFYFVV (207 aa).

It belongs to the binding-protein-dependent transport system permease family. CysTW subfamily.

Its subcellular location is the cell membrane. In terms of biological role, required for the activity of the bacterial transport system of putrescine and spermidine. The sequence is that of Spermidine/putrescine transport system permease protein PotB homolog (potB) from Mycoplasma pneumoniae (strain ATCC 29342 / M129 / Subtype 1) (Mycoplasmoides pneumoniae).